The chain runs to 445 residues: Argininosuccinate synthase (445 aa).

ATP contacts are provided by residues 17-25 (AFSGGLDTS) and Ala43. Residue Tyr99 participates in L-citrulline binding. Gly129 and Thr131 together coordinate ATP. Thr131, Asn135, and Asp136 together coordinate L-aspartate. Asn135 is a binding site for L-citrulline. Asp136 is an ATP binding site. The L-citrulline site is built by Arg139 and Ser192. Asp194 contributes to the ATP binding site. Residues Thr201, Glu203, and Glu280 each contribute to the L-citrulline site.

The protein belongs to the argininosuccinate synthase family. Type 2 subfamily. Homotetramer.

The protein resides in the cytoplasm. The catalysed reaction is L-citrulline + L-aspartate + ATP = 2-(N(omega)-L-arginino)succinate + AMP + diphosphate + H(+). The protein operates within amino-acid biosynthesis; L-arginine biosynthesis; L-arginine from L-ornithine and carbamoyl phosphate: step 2/3. The sequence is that of Argininosuccinate synthase (argG) from Ralstonia nicotianae (strain ATCC BAA-1114 / GMI1000) (Ralstonia solanacearum).